The primary structure comprises 58 residues: Small ribosomal subunit protein bS21 (58 aa).

The disordered stretch occupies residues Arg35 to Lys58. The segment covering Val43–Lys58 has biased composition (basic residues).

The protein belongs to the bacterial ribosomal protein bS21 family.

This Ruminiclostridium cellulolyticum (strain ATCC 35319 / DSM 5812 / JCM 6584 / H10) (Clostridium cellulolyticum) protein is Small ribosomal subunit protein bS21.